Reading from the N-terminus, the 257-residue chain is MTDLNTPESTSKPVWEHFDHVEPGIRRRIAVADPEIKEYLDGMLARIASHRGVEHPFLNAYRTTALDPEQERHLFSECYYFFRYLPFYITGMAVKTRDEMILREIILNVADEVGSDPTHSTLFADFLARIGIDKEHLDGYQPLEVTRQLNDGIRHLYTETSINKALGALYADETMSSIMVSKINDGLRNQGYDDDLRHFWQLHIDVEVGHSNSVFNAIAPYVGSKAARAEFEEGVFEFLGLVERYWDGVRELVGIGK.

Positions 112, 119, 173, 203, 207, and 210 each coordinate Fe cation.

Requires Fe(2+) as cofactor.

It catalyses the reaction 4-chloro-L-lysine + AH2 + O2 = L-2-amino-4-chloropent-4-enoate + formaldehyde + A + NH4(+) + H2O. It functions in the pathway amino-acid metabolism. It participates in antibiotic biosynthesis. In terms of biological role, involved in the biosynthesis of terminal alkyne-containing amino acids such as L-propargylglycine (Pra) and L-beta-ethynylserine, that are produced as antibiotics by S.cattleya. Catalyzes an oxidative C-C bond cleavage in 4-chloro-L-lysine to form 4-chloro-allyl-L-glycine (also named L-2-amino-4-chloropent-4-enoate), with release of formaldehyde and ammonia. Is also able to react with L-lysine directly to produce allylglycine in vitro. The protein is 4-chloro-allylglycine synthase of Streptantibioticus cattleyicolor (strain ATCC 35852 / DSM 46488 / JCM 4925 / NBRC 14057 / NRRL 8057) (Streptomyces cattleya).